A 1074-amino-acid chain; its full sequence is Formin-G (1074 aa).

The GBD/FH3 domain maps to 34-423 (LQMQQGSKTY…DKINEFEKKI (390 aa)). 2 disordered regions span residues 476–507 (QSISPSQDSSNNQKASSSSSNTSTLNDSDIQS) and 549–639 (FTPT…NPSS). Over residues 481–503 (SQDSSNNQKASSSSSNTSTLNDS) the composition is skewed to low complexity. Residues 502–530 (DSDIQSIQSSLKEATLEIERLKLAIEEKM) adopt a coiled-coil conformation. A compositionally biased stretch (polar residues) spans 549–561 (FTPTSPDISNDGQ). Residues 568–610 (APPPSPSPPPPISGGGAPPPPPPPPPPPSGGGAPPPPPPPPPS) show a composition bias toward pro residues. In terms of domain architecture, FH1 spans 597–623 (GGGAPPPPPPPPPSGGKKAGAPGAPPT). The 401-residue stretch at 631–1031 (NKPVINPSSK…ASGDNGAVQN (401 aa)) folds into the FH2 domain. A coiled-coil region spans residues 914–971 (DINDLEKQFNISKNNCKKVLEANIPSSSKFQSTIGSFLEKTEIDIKNLKENQKNIVDS). The DAD domain occupies 1037-1073 (GADPLAALANAIKLGQTGLRKRPGPENSSGGSQLNLN). The interval 1053 to 1074 (TGLRKRPGPENSSGGSQLNLNK) is disordered. The span at 1062–1074 (ENSSGGSQLNLNK) shows a compositional bias: polar residues.

The protein belongs to the formin homology family. Diaphanous subfamily. As to quaternary structure, interacts (via GBD/FH3 domain) with activated Rho-GTPases.

Functionally, formins play an important role in the nucleation of actin and the formation of linear actin filaments. This is Formin-G (forG) from Dictyostelium discoideum (Social amoeba).